A 230-amino-acid polypeptide reads, in one-letter code: Urease accessory protein UreF (230 aa).

This sequence belongs to the UreF family. As to quaternary structure, ureD, UreF and UreG form a complex that acts as a GTP-hydrolysis-dependent molecular chaperone, activating the urease apoprotein by helping to assemble the nickel containing metallocenter of UreC. The UreE protein probably delivers the nickel.

Its subcellular location is the cytoplasm. Functionally, required for maturation of urease via the functional incorporation of the urease nickel metallocenter. This is Urease accessory protein UreF from Allorhizobium ampelinum (strain ATCC BAA-846 / DSM 112012 / S4) (Agrobacterium vitis (strain S4)).